Consider the following 105-residue polypeptide: Thioredoxin (105 aa).

A Thioredoxin domain is found at 2 to 105; sequence VKSVGNLADF…KLEETIKSLV (104 aa). Catalysis depends on nucleophile residues C32 and C35. Residues C32 and C35 are joined by a disulfide bond. 2 positions are modified to S-nitrosocysteine: C69 and C73.

It belongs to the thioredoxin family. Post-translationally, may be nitrosylated on several cysteine residues, depending on the oxidation state. Nitrosylated Cys-73 may serve as donor for nitrosylation of target proteins.

It is found in the nucleus. The protein localises to the cytoplasm. Its subcellular location is the secreted. Functionally, participates in various redox reactions through the reversible oxidation of its active center dithiol to a disulfide and catalyzes dithiol-disulfide exchange reactions. Plays a role in the reversible S-nitrosylation of cysteine residues in target proteins, and thereby contributes to the response to intracellular nitric oxide. Nitrosylates the active site Cys of CASP3 in response to nitric oxide (NO), and thereby inhibits caspase-3 activity. Induces the FOS/JUN AP-1 DNA binding activity in ionizing radiation (IR) cells through its oxidation/reduction status and stimulates AP-1 transcriptional activity. This Gallus gallus (Chicken) protein is Thioredoxin (TXN).